The following is a 411-amino-acid chain: uncharacterized protein (411 aa).

This sequence belongs to the peptidase M20 family.

This is an uncharacterized protein from Haemophilus influenzae (strain ATCC 51907 / DSM 11121 / KW20 / Rd).